A 358-amino-acid chain; its full sequence is GDSL esterase/lipase EXL5 (358 aa).

The first 21 residues, 1 to 21 (MFRKKMLVLALFSIYFLSIEA), serve as a signal peptide directing secretion. N-linked (GlcNAc...) asparagine glycosylation occurs at asparagine 24. Serine 36 (nucleophile) is an active-site residue. Active-site residues include aspartate 333 and histidine 336.

This sequence belongs to the 'GDSL' lipolytic enzyme family. In terms of tissue distribution, flower buds.

Its subcellular location is the secreted. The sequence is that of GDSL esterase/lipase EXL5 (EXL5) from Arabidopsis thaliana (Mouse-ear cress).